The primary structure comprises 117 residues: Putative membrane protein insertion efficiency factor (117 aa).

It belongs to the UPF0161 family.

It is found in the cell inner membrane. In terms of biological role, could be involved in insertion of integral membrane proteins into the membrane. This chain is Putative membrane protein insertion efficiency factor, found in Bartonella quintana (strain Toulouse) (Rochalimaea quintana).